The sequence spans 165 residues: Phosphopantetheine adenylyltransferase (165 aa).

Serine 10 serves as a coordination point for substrate. Residues 10–11 (SF) and histidine 18 each bind ATP. The substrate site is built by lysine 42, serine 79, and arginine 93. Residues 94–96 (GLR), glutamate 104, and 129–135 (VRPITAT) each bind ATP.

The protein belongs to the bacterial CoaD family. In terms of assembly, homohexamer. The cofactor is Mg(2+).

It is found in the cytoplasm. It catalyses the reaction (R)-4'-phosphopantetheine + ATP + H(+) = 3'-dephospho-CoA + diphosphate. It participates in cofactor biosynthesis; coenzyme A biosynthesis; CoA from (R)-pantothenate: step 4/5. Functionally, reversibly transfers an adenylyl group from ATP to 4'-phosphopantetheine, yielding dephospho-CoA (dPCoA) and pyrophosphate. The sequence is that of Phosphopantetheine adenylyltransferase from Bradyrhizobium diazoefficiens (strain JCM 10833 / BCRC 13528 / IAM 13628 / NBRC 14792 / USDA 110).